The sequence spans 503 residues: Arabinose import ATP-binding protein AraG 1 (503 aa).

ABC transporter domains lie at 5–240 (LRFD…MVGR) and 251–497 (RALG…LPQT). An ATP-binding site is contributed by 37-44 (GENGAGKS).

Belongs to the ABC transporter superfamily. Arabinose importer (TC 3.A.1.2.2) family. In terms of assembly, the complex is composed of two ATP-binding proteins (AraG), two transmembrane proteins (AraH) and a solute-binding protein (AraF).

It localises to the cell inner membrane. It carries out the reaction L-arabinose(out) + ATP + H2O = L-arabinose(in) + ADP + phosphate + H(+). Functionally, part of the ABC transporter complex AraFGH involved in arabinose import. Responsible for energy coupling to the transport system. The protein is Arabinose import ATP-binding protein AraG 1 of Burkholderia lata (strain ATCC 17760 / DSM 23089 / LMG 22485 / NCIMB 9086 / R18194 / 383).